A 517-amino-acid chain; its full sequence is ATP synthase subunit alpha 1 (517 aa).

An ATP-binding site is contributed by 174 to 181 (GDRQTGKT).

This sequence belongs to the ATPase alpha/beta chains family. As to quaternary structure, F-type ATPases have 2 components, CF(1) - the catalytic core - and CF(0) - the membrane proton channel. CF(1) has five subunits: alpha(3), beta(3), gamma(1), delta(1), epsilon(1). CF(0) has three main subunits: a(1), b(2) and c(9-12). The alpha and beta chains form an alternating ring which encloses part of the gamma chain. CF(1) is attached to CF(0) by a central stalk formed by the gamma and epsilon chains, while a peripheral stalk is formed by the delta and b chains.

The protein resides in the cell inner membrane. The catalysed reaction is ATP + H2O + 4 H(+)(in) = ADP + phosphate + 5 H(+)(out). Its function is as follows. Produces ATP from ADP in the presence of a proton gradient across the membrane. The alpha chain is a regulatory subunit. The sequence is that of ATP synthase subunit alpha 1 from Albidiferax ferrireducens (strain ATCC BAA-621 / DSM 15236 / T118) (Rhodoferax ferrireducens).